Consider the following 159-residue polypeptide: Endoribonuclease YbeY (159 aa).

Zn(2+)-binding residues include H123, H127, and H133.

This sequence belongs to the endoribonuclease YbeY family. Zn(2+) serves as cofactor.

The protein resides in the cytoplasm. Single strand-specific metallo-endoribonuclease involved in late-stage 70S ribosome quality control and in maturation of the 3' terminus of the 16S rRNA. The polypeptide is Endoribonuclease YbeY (Bacillus pumilus (strain SAFR-032)).